Here is a 354-residue protein sequence, read N- to C-terminus: UDP-N-acetylglucosamine--N-acetylmuramyl-(pentapeptide) pyrophosphoryl-undecaprenol N-acetylglucosamine transferase (354 aa).

UDP-N-acetyl-alpha-D-glucosamine-binding positions include 15-17 (TGG), Asn-127, Arg-163, Ser-191, Ile-244, 263-268 (ALTVSE), and Gln-288.

Belongs to the glycosyltransferase 28 family. MurG subfamily.

Its subcellular location is the cell inner membrane. The enzyme catalyses di-trans,octa-cis-undecaprenyl diphospho-N-acetyl-alpha-D-muramoyl-L-alanyl-D-glutamyl-meso-2,6-diaminopimeloyl-D-alanyl-D-alanine + UDP-N-acetyl-alpha-D-glucosamine = di-trans,octa-cis-undecaprenyl diphospho-[N-acetyl-alpha-D-glucosaminyl-(1-&gt;4)]-N-acetyl-alpha-D-muramoyl-L-alanyl-D-glutamyl-meso-2,6-diaminopimeloyl-D-alanyl-D-alanine + UDP + H(+). The protein operates within cell wall biogenesis; peptidoglycan biosynthesis. Its function is as follows. Cell wall formation. Catalyzes the transfer of a GlcNAc subunit on undecaprenyl-pyrophosphoryl-MurNAc-pentapeptide (lipid intermediate I) to form undecaprenyl-pyrophosphoryl-MurNAc-(pentapeptide)GlcNAc (lipid intermediate II). This is UDP-N-acetylglucosamine--N-acetylmuramyl-(pentapeptide) pyrophosphoryl-undecaprenol N-acetylglucosamine transferase from Vibrio cholerae serotype O1 (strain ATCC 39315 / El Tor Inaba N16961).